A 102-amino-acid polypeptide reads, in one-letter code: Small ribosomal subunit protein uS10 (102 aa).

This sequence belongs to the universal ribosomal protein uS10 family. In terms of assembly, part of the 30S ribosomal subunit.

Its function is as follows. Involved in the binding of tRNA to the ribosomes. The sequence is that of Small ribosomal subunit protein uS10 from Listeria innocua serovar 6a (strain ATCC BAA-680 / CLIP 11262).